The primary structure comprises 368 residues: Endoglucanase (368 aa).

An N-terminal signal peptide occupies residues 1–21 (MNVLRSGIVTMLLLAAFSVQA). Glu-55 acts as the Proton donor in catalysis. Residue Asp-116 is the Nucleophile of the active site.

Belongs to the glycosyl hydrolase 8 (cellulase D) family.

Its subcellular location is the secreted. The catalysed reaction is Endohydrolysis of (1-&gt;4)-beta-D-glucosidic linkages in cellulose, lichenin and cereal beta-D-glucans.. It functions in the pathway glycan metabolism; bacterial cellulose biosynthesis. Functionally, hydrolyzes carboxymethylcellulose. The polypeptide is Endoglucanase (bcsZ) (Escherichia coli (strain K12)).